The primary structure comprises 116 residues: Large ribosomal subunit protein uL18 (116 aa).

It belongs to the universal ribosomal protein uL18 family. As to quaternary structure, part of the 50S ribosomal subunit; part of the 5S rRNA/L5/L18/L25 subcomplex. Contacts the 5S and 23S rRNAs.

Functionally, this is one of the proteins that bind and probably mediate the attachment of the 5S RNA into the large ribosomal subunit, where it forms part of the central protuberance. In Marinomonas sp. (strain MWYL1), this protein is Large ribosomal subunit protein uL18.